A 201-amino-acid chain; its full sequence is Lymphotoxin-alpha (201 aa).

A signal peptide spans 1–27 (MTSSGVLCLLGALSLQVLLLQPPGAQG). Residues 23–52 (PGAQGAPNPDNSHSSSPAPPQTAQHLSQKS) are disordered. Residues 31-51 (PDNSHSSSPAPPQTAQHLSQK) show a composition bias toward polar residues. A THD domain is found at 60-201 (PAAHLVGDPS…SSVFFGAFAL (142 aa)). Residue Asn-93 is glycosylated (N-linked (GlcNAc...) asparagine). A disulfide bridge connects residues Cys-117 and Cys-152.

It belongs to the tumor necrosis factor family. In terms of assembly, homotrimer, and heterotrimer of either two LTB and one LTA subunits or (less prevalent) two LTA and one LTB subunits. Interacts with TNFRSF14.

The protein localises to the secreted. Its subcellular location is the membrane. Functionally, cytokine that in its homotrimeric form binds to TNFRSF1A/TNFR1, TNFRSF1B/TNFBR and TNFRSF14/HVEM. In its heterotrimeric form with LTB binds to TNFRSF3/LTBR. Lymphotoxin is produced by lymphocytes and is cytotoxic for a wide range of tumor cells in vitro and in vivo. The protein is Lymphotoxin-alpha (LTA) of Notamacropus eugenii (Tammar wallaby).